The chain runs to 311 residues: Ornithine carbamoyltransferase (311 aa).

Residues Gln85, Arg109, and 136–139 each bind carbamoyl phosphate; that span reads HPCQ. L-ornithine is bound by residues Asn167, Asp231, and 235-236; that span reads SM. Carbamoyl phosphate contacts are provided by residues 271–272 and Arg299; that span reads CL.

This sequence belongs to the aspartate/ornithine carbamoyltransferase superfamily. OTCase family.

The protein resides in the cytoplasm. The enzyme catalyses carbamoyl phosphate + L-ornithine = L-citrulline + phosphate + H(+). Its pathway is amino-acid biosynthesis; L-arginine biosynthesis; L-arginine from L-ornithine and carbamoyl phosphate: step 1/3. Functionally, reversibly catalyzes the transfer of the carbamoyl group from carbamoyl phosphate (CP) to the N(epsilon) atom of ornithine (ORN) to produce L-citrulline. This chain is Ornithine carbamoyltransferase (argF), found in Geobacillus stearothermophilus (Bacillus stearothermophilus).